The following is a 77-amino-acid chain: Translation initiation factor IF-1, chloroplastic (77 aa).

The S1-like domain occupies 1–71 (MKEQKWIHEG…TRGRIIYRLR (71 aa)).

This sequence belongs to the IF-1 family. Component of the 30S ribosomal translation pre-initiation complex which assembles on the 30S ribosome in the order IF-2 and IF-3, IF-1 and N-formylmethionyl-tRNA(fMet); mRNA recruitment can occur at any time during PIC assembly.

It is found in the plastid. The protein resides in the chloroplast. Functionally, one of the essential components for the initiation of protein synthesis. Stabilizes the binding of IF-2 and IF-3 on the 30S subunit to which N-formylmethionyl-tRNA(fMet) subsequently binds. Helps modulate mRNA selection, yielding the 30S pre-initiation complex (PIC). Upon addition of the 50S ribosomal subunit IF-1, IF-2 and IF-3 are released leaving the mature 70S translation initiation complex. In Spinacia oleracea (Spinach), this protein is Translation initiation factor IF-1, chloroplastic.